Consider the following 344-residue polypeptide: Dihydroorotase (344 aa).

Zn(2+) is bound by residues His13 and His15. Substrate-binding positions include 15–17 and Asn41; that span reads HLR. 3 residues coordinate Zn(2+): Lys99, His136, and His174. Lys99 carries the N6-carboxylysine modification. His136 contacts substrate. Leu219 contributes to the substrate binding site. Asp247 lines the Zn(2+) pocket. The active site involves Asp247. Residues His251 and Ala263 each coordinate substrate.

It belongs to the metallo-dependent hydrolases superfamily. DHOase family. Class II DHOase subfamily. As to quaternary structure, homodimer. Zn(2+) is required as a cofactor.

The enzyme catalyses (S)-dihydroorotate + H2O = N-carbamoyl-L-aspartate + H(+). Its pathway is pyrimidine metabolism; UMP biosynthesis via de novo pathway; (S)-dihydroorotate from bicarbonate: step 3/3. Functionally, catalyzes the reversible cyclization of carbamoyl aspartate to dihydroorotate. This Microcystis aeruginosa (strain NIES-843 / IAM M-2473) protein is Dihydroorotase.